The primary structure comprises 292 residues: Zinc finger protein OZF (292 aa).

10 C2H2-type zinc fingers span residues 16–38 (FACKVCGKVFSHKSNLTEHEHFH), 44–66 (FECNECGKAFSQKQYVIKHQNTH), 72–94 (FECNECGKSFSQKENLLTHQKIH), 100–122 (FECKDCGKAFIQKSNLIRHQRTH), 128–150 (FVCKECGKTFSGKSNLTEHEKIH), 156–178 (FKCSECGTAFGQKKYLIKHQNIH), 184–206 (YECNECGKAFSQRTSLIVHVRIH), 212–234 (YECNVCGKAFSQSSSLTVHVRSH), 240–262 (YGCNECGKAFSQFSTLALHLRIH), and 268–290 (YQCSECGKAFSQKSHHIRHQKIH). Glycyl lysine isopeptide (Lys-Gly) (interchain with G-Cter in SUMO2) cross-links involve residues lysine 28, lysine 51, and lysine 56. Residues lysine 157 and lysine 169 each participate in a glycyl lysine isopeptide (Lys-Gly) (interchain with G-Cter in SUMO) cross-link. A Glycyl lysine isopeptide (Lys-Gly) (interchain with G-Cter in SUMO2) cross-link involves residue lysine 173. Residues 212–292 (YECNVCGKAF…HIRHQKIHTH (81 aa)) form an interaction with TERF2IP region.

This sequence belongs to the krueppel C2H2-type zinc-finger protein family. As to quaternary structure, binds DNA. Interacts with SUMO conjugating enzyme UBC9/UBE2I. Interacts with the telomeric protein TERF2IP. Sumoylated. As to expression, liver, skeletal and heart muscle, mammary cells. Very low levels in brain, lung, placenta and kidney. Strongly overexpressed in many pancreas and colorectal cancers. Increased gene copy numbers are detected in 3 of 12 tumor cell lines and 2 of 12 primary pancreatic carcinomas. Overexpressed in 80% of colorectal cancers.

It localises to the nucleus. This Homo sapiens (Human) protein is Zinc finger protein OZF (ZNF146).